Reading from the N-terminus, the 425-residue chain is Serine--tRNA ligase (425 aa).

Residue 230-232 participates in L-serine binding; the sequence is TAE. An ATP-binding site is contributed by 261–263; it reads RSE. E284 is a binding site for L-serine. 348–351 is a binding site for ATP; it reads EISS. L-serine is bound at residue S384.

It belongs to the class-II aminoacyl-tRNA synthetase family. Type-1 seryl-tRNA synthetase subfamily. Homodimer. The tRNA molecule binds across the dimer.

It is found in the cytoplasm. It carries out the reaction tRNA(Ser) + L-serine + ATP = L-seryl-tRNA(Ser) + AMP + diphosphate + H(+). The catalysed reaction is tRNA(Sec) + L-serine + ATP = L-seryl-tRNA(Sec) + AMP + diphosphate + H(+). It participates in aminoacyl-tRNA biosynthesis; selenocysteinyl-tRNA(Sec) biosynthesis; L-seryl-tRNA(Sec) from L-serine and tRNA(Sec): step 1/1. Functionally, catalyzes the attachment of serine to tRNA(Ser). Is also able to aminoacylate tRNA(Sec) with serine, to form the misacylated tRNA L-seryl-tRNA(Sec), which will be further converted into selenocysteinyl-tRNA(Sec). This is Serine--tRNA ligase from Streptococcus equi subsp. zooepidemicus (strain MGCS10565).